The chain runs to 291 residues: MANNVLNRYLFEDLSVRGELVQLDEAYQRIISSKEYPAAVQKLLGELLVSTTLLTATLKFEGSITIQLQGDGPVSLAVINGDHNQQVRGVARWEGDIADDASLHEMMGKGYLVITIEPKKGERYQGVVGLEGENLTEVLEGYFANSEQLKTRLWIRTGEFEGKPHAAGMLIQVIPDGTGSPDDFEHLEQLTNTVKDEELFGLEANDLLYRLYNQDKVRVYEPQPVAFHCGCSRERSGAAIITVEKAEIYDILAEVGSVSLHCDYCGTTYTFDETEVTELYTQASGGNKTLH.

Intrachain disulfides connect Cys229/Cys231 and Cys262/Cys265.

The protein belongs to the HSP33 family. Under oxidizing conditions two disulfide bonds are formed involving the reactive cysteines. Under reducing conditions zinc is bound to the reactive cysteines and the protein is inactive.

The protein localises to the cytoplasm. Functionally, redox regulated molecular chaperone. Protects both thermally unfolding and oxidatively damaged proteins from irreversible aggregation. Plays an important role in the bacterial defense system toward oxidative stress. The chain is 33 kDa chaperonin from Vibrio parahaemolyticus serotype O3:K6 (strain RIMD 2210633).